Consider the following 92-residue polypeptide: Small nuclear ribonucleoprotein E (92 aa).

The region spanning 18–92 (INLIFRYLQN…NITLLQSVSN (75 aa)) is the Sm domain.

Belongs to the snRNP Sm proteins family. Core component of the spliceosomal U1, U2, U4 and U5 small nuclear ribonucleoproteins (snRNPs), the building blocks of the spliceosome. Most spliceosomal snRNPs contain a common set of Sm proteins, snrpb, snrpd1, snrpd2, snrpd3, snrpe, snrpf and snrpg that assemble in a heptameric protein ring on the Sm site of the small nuclear RNA to form the core snRNP. Component of the U1 snRNP. The U1 snRNP is composed of the U1 snRNA and the 7 core Sm proteins snrpb, snrpd1, snrpd2, snrpd3, snrpe, snrpf and snrpg, and at least three U1 snRNP-specific proteins snrnp70/u1-70k, snrpa/u1-a and snrpc/u1-c. Component of the U4/U6-U5 tri-snRNP complex composed of the U4, U6 and U5 snRNAs and at least prpf3, prpf4, prpf6, prpf8, prpf31, snrnp200, txnl4a, snrnp40, snrpb, snrpd1, snrpd2, snrpd3, snrpe, snrpf, snrpg, ddx23, cd2bp2, ppih, snu13, eftud2, sart1 and usp39, plus lsm2, lsm3, lsm4, lsm5, lsm6, lsm7 and lsm8. Component of the U7 snRNP complex, or U7 Sm protein core complex, that is composed of the U7 snRNA and at least lsm10, lsm11, snrpb, snrpd3, snrpe, snrpf and snrpg; the complex does not contain snrpd1 and snrpd2. Component of the minor spliceosome, which splices U12-type introns. Part of the SMN-Sm complex that contains smn1, gemin2/sip1, ddx20/gemin3, gemin4, gemin5, gemin6, gemin7, gemin8, strap/unrip and the Sm proteins snrpb, snrpd1, snrpd2, snrpd3, snrpe, snrpf and snrpg; catalyzes core snRNPs assembly. Forms a 6S pICln-Sm complex composed of clns1a/pICln, snrpd1, snrpd2, snrpe, snrpf and snrpg; ring-like structure where clns1a/pICln mimics additional Sm proteins and which is unable to assemble into the core snRNP.

The protein resides in the cytoplasm. Its subcellular location is the cytosol. It is found in the nucleus. Plays a role in pre-mRNA splicing as a core component of the spliceosomal U1, U2, U4 and U5 small nuclear ribonucleoproteins (snRNPs), the building blocks of the spliceosome. Component of both the pre-catalytic spliceosome B complex and activated spliceosome C complexes. As a component of the minor spliceosome, involved in the splicing of U12-type introns in pre-mRNAs. As part of the U7 snRNP it is involved in histone 3'-end processing. The protein is Small nuclear ribonucleoprotein E (snrpe) of Danio rerio (Zebrafish).